The chain runs to 88 residues: Small ribosomal subunit protein bS16c (88 aa).

As to quaternary structure, component of the chloroplast small ribosomal subunit (SSU). Mature 70S chloroplast ribosomes of higher plants consist of a small (30S) and a large (50S) subunit. The 30S small subunit contains 1 molecule of ribosomal RNA (16S rRNA) and 24 different proteins. The 50S large subunit contains 3 rRNA molecules (23S, 5S and 4.5S rRNA) and 33 different proteins.

The protein localises to the plastid. It is found in the chloroplast. Its function is as follows. Component of the chloroplast ribosome (chloro-ribosome), a dedicated translation machinery responsible for the synthesis of chloroplast genome-encoded proteins, including proteins of the transcription and translation machinery and components of the photosynthetic apparatus. The protein is Small ribosomal subunit protein bS16c of Spinacia oleracea (Spinach).